The chain runs to 175 residues: DELTA-stichotoxin-Hcr4a (175 aa).

The interval 1-10 (ALAGAIIAGA) is plays an important role in the hemolytic activity. An N-terminal region region spans residues 9–28 (GASLTFQILDKVLAELGQVS). Residues S52, V85, S103, P105, Y131, Y135, and Y136 each contribute to the phosphocholine site. The trp-rich region, which is important for the binding to lipid membrane stretch occupies residues 103 to 118 (SVPFDYNLYSNWWDVK).

The protein belongs to the actinoporin family. Sea anemone subfamily. In terms of assembly, octamer or nonamer in membranes. Monomer in the soluble state.

The protein localises to the secreted. It is found in the nematocyst. Its subcellular location is the target cell membrane. In terms of biological role, pore-forming protein that forms cations-selective hydrophilic pores of around 1 nm and causes cardiac stimulation and cytolysis. Pore formation is a multi-step process that involves specific recognition of membrane sphingomyelin (but neither cholesterol nor phosphatidylcholine) using aromatic rich region and adjacent phosphocholine (POC) binding site, firm binding to the membrane (mainly driven by hydrophobic interactions) accompanied by the transfer of the N-terminal region to the lipid-water interface and finally pore formation after oligomerization of monomers. This Radianthus crispa (Leathery sea anemone) protein is DELTA-stichotoxin-Hcr4a.